Reading from the N-terminus, the 230-residue chain is Large ribosomal subunit protein uL1 (230 aa).

This sequence belongs to the universal ribosomal protein uL1 family. Part of the 50S ribosomal subunit.

In terms of biological role, binds directly to 23S rRNA. The L1 stalk is quite mobile in the ribosome, and is involved in E site tRNA release. Functionally, protein L1 is also a translational repressor protein, it controls the translation of the L11 operon by binding to its mRNA. This chain is Large ribosomal subunit protein uL1, found in Onion yellows phytoplasma (strain OY-M).